A 210-amino-acid polypeptide reads, in one-letter code: Large ribosomal subunit protein bL25 (210 aa).

A compositionally biased stretch (low complexity) spans 191 to 200 (EAPAEGAAAP). The interval 191 to 210 (EAPAEGAAAPAPAPAKKGKK) is disordered.

The protein belongs to the bacterial ribosomal protein bL25 family. CTC subfamily. As to quaternary structure, part of the 50S ribosomal subunit; part of the 5S rRNA/L5/L18/L25 subcomplex. Contacts the 5S rRNA. Binds to the 5S rRNA independently of L5 and L18.

In terms of biological role, this is one of the proteins that binds to the 5S RNA in the ribosome where it forms part of the central protuberance. The polypeptide is Large ribosomal subunit protein bL25 (Paracidovorax citrulli (strain AAC00-1) (Acidovorax citrulli)).